The chain runs to 540 residues: Phosphatidylinositol 4-phosphate 5-kinase type-1 beta (540 aa).

The interval 1–21 (MSSAAENGEAAPGKQNEEKTY) is disordered. The PIPK domain occupies 25–395 (ASSAIKGAIQ…RFLKFMNSRV (371 aa)). Ser-445, Ser-447, and Ser-448 each carry phosphoserine.

In terms of assembly, interacts with RAC1, AJUBA, PLD1, PLD2 and ARF1. Detected in heart, pancreas, brain, kidney, skeletal muscle and lung.

It is found in the cytoplasm. The protein resides in the cytosol. It localises to the cell membrane. The protein localises to the endomembrane system. It carries out the reaction a 1,2-diacyl-sn-glycero-3-phospho-(1D-myo-inositol 4-phosphate) + ATP = a 1,2-diacyl-sn-glycero-3-phospho-(1D-myo-inositol-4,5-bisphosphate) + ADP + H(+). The catalysed reaction is 1-octadecanoyl-2-(5Z,8Z,11Z,14Z)-eicosatetraenoyl-sn-glycero-3-phospho-1D-myo-inositol 4-phosphate + ATP = 1-octadecanoyl-2-(5Z,8Z,11Z,14Z)-eicosatetraenoyl-sn-glycero-3-phospho-1D-myo-inositol 4,5-bisphosphate + ADP + H(+). The enzyme catalyses 1-octadecanoyl-2-(9Z)-octadecenoyl-sn-glycero-3-phospho-1D-myo-inositol 4-phosphate + ATP = 1-octadecanoyl-2-(9Z)-octadecenoyl-sn-glycero-3-phospho-1D-myo-inositol 4,5-bisphosphate + ADP + H(+). It catalyses the reaction 1-octadecanoyl-2-(9Z)-octadecenoyl-sn-glycero-3-phospho-1D-myo-inositol + ATP = 1-octadecanoyl-2-(9Z)-octadecenoyl-sn-glycero-3-phospho-1D-myo-inositol 5-phosphate + ADP + H(+). It carries out the reaction 1-octadecanoyl-2-(9Z,12Z)-octadecadienoyl-sn-glycero-3-phospho-1D-myo-inositol + ATP = 1-octadecanoyl-2-(9Z,12Z)-octadecadienoyl-sn-glycero-3-phospho-1D-myo-inositol 5-phosphate + ADP + H(+). The catalysed reaction is 1-octadecanoyl-2-(5Z,8Z,11Z,14Z-eicosatetraenoyl)-sn-glycero-3-phospho-(1D-myo-inositol) + ATP = 1-octadecanoyl-2-(5Z,8Z,11Z,14Z)-eicosatetraenoyl-sn-glycero-3-phospho-1D-myo-inositol 5-phosphate + ADP + H(+). The enzyme catalyses 1,2-di-(9Z,12Z)-octadecadienoyl-sn-glycero-3-phospho-1D-myo-inositol + ATP = 1,2-di(9Z,12Z)-octadecadienoyl-sn-glycero-3-phospho-1D-myo-inositol 5-phosphate + ADP + H(+). In terms of biological role, catalyzes the phosphorylation of phosphatidylinositol 4-phosphate (PtdIns(4)P/PI4P) to form phosphatidylinositol 4,5-bisphosphate (PtdIns(4,5)P2/PIP2), a lipid second messenger that regulates several cellular processes such as signal transduction, vesicle trafficking, actin cytoskeleton dynamics, cell adhesion, and cell motility. PtdIns(4,5)P2 can directly act as a second messenger or can be utilized as a precursor to generate other second messengers: inositol 1,4,5-trisphosphate (IP3), diacylglycerol (DAG) or phosphatidylinositol-3,4,5-trisphosphate (PtdIns(3,4,5)P3/PIP3). Mediates RAC1-dependent reorganization of actin filaments. Contributes to the activation of phospholipase PLD2. Together with PIP5K1A, is required, after stimulation by G-protein coupled receptors, for the synthesis of IP3 that will induce stable platelet adhesion. The chain is Phosphatidylinositol 4-phosphate 5-kinase type-1 beta from Homo sapiens (Human).